The chain runs to 116 residues: Peptidyl-tRNA hydrolase (116 aa).

The protein belongs to the PTH2 family.

The protein resides in the cytoplasm. It carries out the reaction an N-acyl-L-alpha-aminoacyl-tRNA + H2O = an N-acyl-L-amino acid + a tRNA + H(+). The natural substrate for this enzyme may be peptidyl-tRNAs which drop off the ribosome during protein synthesis. This chain is Peptidyl-tRNA hydrolase (pth), found in Methanococcus maripaludis (strain DSM 14266 / JCM 13030 / NBRC 101832 / S2 / LL).